We begin with the raw amino-acid sequence, 190 residues long: dTTP/UTP pyrophosphatase (190 aa).

The Proton acceptor role is filled by aspartate 68.

It belongs to the Maf family. YhdE subfamily. It depends on a divalent metal cation as a cofactor.

It is found in the cytoplasm. It carries out the reaction dTTP + H2O = dTMP + diphosphate + H(+). It catalyses the reaction UTP + H2O = UMP + diphosphate + H(+). In terms of biological role, nucleoside triphosphate pyrophosphatase that hydrolyzes dTTP and UTP. May have a dual role in cell division arrest and in preventing the incorporation of modified nucleotides into cellular nucleic acids. The chain is dTTP/UTP pyrophosphatase from Pyrococcus furiosus (strain ATCC 43587 / DSM 3638 / JCM 8422 / Vc1).